We begin with the raw amino-acid sequence, 315 residues long: 4-diphosphocytidyl-2-C-methyl-D-erythritol kinase (315 aa).

The active site involves Lys-8. 93-103 lines the ATP pocket; it reads PVAAGLAGGSS. Asp-135 is an active-site residue.

Belongs to the GHMP kinase family. IspE subfamily.

The enzyme catalyses 4-CDP-2-C-methyl-D-erythritol + ATP = 4-CDP-2-C-methyl-D-erythritol 2-phosphate + ADP + H(+). It participates in isoprenoid biosynthesis; isopentenyl diphosphate biosynthesis via DXP pathway; isopentenyl diphosphate from 1-deoxy-D-xylulose 5-phosphate: step 3/6. Functionally, catalyzes the phosphorylation of the position 2 hydroxy group of 4-diphosphocytidyl-2C-methyl-D-erythritol. The sequence is that of 4-diphosphocytidyl-2-C-methyl-D-erythritol kinase from Heliobacterium modesticaldum (strain ATCC 51547 / Ice1).